Here is a 113-residue protein sequence, read N- to C-terminus: T cell receptor alpha variable 36/delta variable 7 (113 aa).

The signal sequence occupies residues 1–21; it reads MMKCPQALLAIFWLLLSWVSS. Positions 23–113 constitute an Ig-like domain; that stretch reads DKVVQSPLSL…DSAIYLCAVE (91 aa). Residues Asn-43 and Asn-96 are each glycosylated (N-linked (GlcNAc...) asparagine). Cys-44 and Cys-110 are oxidised to a cystine.

Alpha-beta TR is a heterodimer composed of an alpha and beta chain; disulfide-linked. The alpha-beta TR is associated with the transmembrane signaling CD3 coreceptor proteins to form the TR-CD3 (TcR or TCR). The assembly of alpha-beta TR heterodimers with CD3 occurs in the endoplasmic reticulum where a single alpha-beta TR heterodimer associates with one CD3D-CD3E heterodimer, one CD3G-CD3E heterodimer and one CD247 homodimer forming a stable octameric structure. CD3D-CD3E and CD3G-CD3E heterodimers preferentially associate with TR alpha and TR beta chains, respectively. The association of the CD247 homodimer is the last step of TcR assembly in the endoplasmic reticulum and is required for transport to the cell surface.

The protein localises to the cell membrane. Functionally, v region of the variable domain of T cell receptor (TR) alpha chain that participates in the antigen recognition. Alpha-beta T cell receptors are antigen specific receptors which are essential to the immune response and are present on the cell surface of T lymphocytes. Recognize peptide-major histocompatibility (MH) (pMH) complexes that are displayed by antigen presenting cells (APC), a prerequisite for efficient T cell adaptive immunity against pathogens. Binding of alpha-beta TR to pMH complex initiates TR-CD3 clustering on the cell surface and intracellular activation of LCK that phosphorylates the ITAM motifs of CD3G, CD3D, CD3E and CD247 enabling the recruitment of ZAP70. In turn ZAP70 phosphorylates LAT, which recruits numerous signaling molecules to form the LAT signalosome. The LAT signalosome propagates signal branching to three major signaling pathways, the calcium, the mitogen-activated protein kinase (MAPK) kinase and the nuclear factor NF-kappa-B (NF-kB) pathways, leading to the mobilization of transcription factors that are critical for gene expression and essential for T cell growth and differentiation. The T cell repertoire is generated in the thymus, by V-(D)-J rearrangement. This repertoire is then shaped by intrathymic selection events to generate a peripheral T cell pool of self-MH restricted, non-autoaggressive T cells. Post-thymic interaction of alpha-beta TR with the pMH complexes shapes TR structural and functional avidity. This is T cell receptor alpha variable 36/delta variable 7 from Homo sapiens (Human).